The following is a 522-amino-acid chain: Transcription factor SPT20 homolog (522 aa).

Position 284 is a phosphoserine (Ser284). Disordered stretches follow at residues 361–380 and 408–522; these read DEES…DHSN and PVKM…RHES. The segment covering 412–425 has biased composition (low complexity); sequence SHSSSGSASLSQVS. The span at 433 to 442 shows a compositional bias: polar residues; the sequence is TETVSVQSSV. Low complexity predominate over residues 458-467; it reads SSSGNSSSGN. A compositionally biased stretch (pro residues) spans 481 to 492; it reads PTPPPSSKPPTI. Thr482 is modified (phosphothreonine). Residues 506–522 are compositionally biased toward low complexity; that stretch reads LSPAALSPASSSQRHES. Phosphoserine occurs at positions 507 and 512.

The protein belongs to the SPT20 family. As to quaternary structure, interacts with ATG9A. Interacts with MAPK14.

Functionally, required for MAP kinase p38 (MAPK11, MAPK12, MAPK13 and/or MAPK14) activation during gastrulation. Required for down-regulation of E-cadherin during gastrulation by regulating E-cadherin protein level downstream from NCK-interacting kinase (NIK) and independently of the regulation of transcription by FGF signaling and Snail. Required for starvation-induced ATG9A trafficking during autophagy. This is Transcription factor SPT20 homolog (SUPT20H) from Pongo abelii (Sumatran orangutan).